A 457-amino-acid chain; its full sequence is Peptidyl-prolyl cis-trans isomerase FKBP5 (457 aa).

M1 is subject to N-acetylmethionine. The tract at residues 1–26 (MTTDEGAKNNGESPTATVAEQGEDIT) is disordered. S13 bears the Phosphoserine mark. PPIase FKBP-type domains lie at 50-138 (GDKV…LDFK) and 165-251 (GATV…KSFE). TPR repeat units follow at residues 268–301 (AAIVKEKGTVYFKGGKYMQAVIQYGKIVSWLEME), 317–350 (LAAFLNLAMCYSKLREYTKAVECCDKALGLDSAN), and 351–384 (GKGLYRRGEAQLLMNEFESAKGDFEKVLEVNPQN). The segment at 420–457 (DAKEEANKAMGKKTSEGVTNEKGTDSQAMEEEKPEGHV) is disordered. A Phosphoserine modification is found at S445.

As to quaternary structure, part of a heteromultimeric cytoplasmic complex with HSP90AA1, HSPA1A/HSPA1B and steroid receptors. Upon ligand binding dissociates from the complex and FKBP4 takes its place. Interacts with functionally mature heterooligomeric progesterone receptor complexes along with HSP90 and TEBP. Interacts with IFI44L; this interaction modulates the kinase activity of IKBKB and IKBKE. Interacts with IKBKB and IKBKE.

The protein resides in the cytoplasm. It is found in the nucleus. It carries out the reaction [protein]-peptidylproline (omega=180) = [protein]-peptidylproline (omega=0). With respect to regulation, inhibited by FK506 but not cyclosporin. Immunophilin protein with PPIase and co-chaperone activities. Component of unligated steroid receptors heterocomplexes through interaction with heat-shock protein 90 (HSP90). Plays a role in the intracellular trafficking of heterooligomeric forms of steroid hormone receptors maintaining the complex into the cytoplasm when unliganded. Acts as a regulator of Akt/AKT1 activity by promoting the interaction between Akt/AKT1 and PHLPP1, thereby enhancing dephosphorylation and subsequent activation of Akt/AKT1. Interacts with IKBKE and IKBKB which facilitates IKK complex assembly leading to increased IKBKE and IKBKB kinase activity, NF-kappaB activation, and IFN production. The protein is Peptidyl-prolyl cis-trans isomerase FKBP5 (FKBP5) of Pongo abelii (Sumatran orangutan).